The primary structure comprises 217 residues: Small ribosomal subunit protein uS3 (217 aa).

The 71-residue stretch at Ile-40–Arg-110 folds into the KH type-2 domain.

This sequence belongs to the universal ribosomal protein uS3 family. Part of the 30S ribosomal subunit. Forms a tight complex with proteins S10 and S14.

Its function is as follows. Binds the lower part of the 30S subunit head. Binds mRNA in the 70S ribosome, positioning it for translation. In Rickettsia felis (strain ATCC VR-1525 / URRWXCal2) (Rickettsia azadi), this protein is Small ribosomal subunit protein uS3.